The sequence spans 166 residues: Immunity protein RhsIB (166 aa).

Immunity component of a toxin-immunity protein module, which functions as a cellular contact-dependent growth inhibition (CDI) system. Specifically inhibits its cognate toxin RhsB. Cell contact is necessary for growth inhibition. The protein is Immunity protein RhsIB (rhsIB) of Dickeya dadantii (strain 3937) (Erwinia chrysanthemi (strain 3937)).